Consider the following 1148-residue polypeptide: Protein pianissimo A (1148 aa).

The span at 1-34 (MTSSDSSVNTTSSSFGNISISSPNHSSSTPPLNN) shows a compositional bias: low complexity. The segment at 1 to 41 (MTSSDSSVNTTSSSFGNISISSPNHSSSTPPLNNGNGNNVS) is disordered. The N-terminal Ras-GEF domain occupies 803-914 (KVSALSLNVL…STSGVYLPPH (112 aa)).

Belongs to the RICTOR family. Part of a complex, TORC2, consisting of tor, lst8, piaA and ripA. Additional proteins, such as 14-3-3 and heat-shock proteins, may also belong to the TORC2 complex.

Its subcellular location is the cytoplasm. Its function is as follows. Regulates cell growth, chemotaxis, signal relay and the actin cytoskeleton. Required for chemoattractant receptor and G protein-mediated activation of the 12 transmembrane domain adenylyl cyclase. Functions as a part of protein complex TORC2. TORC2, is presumed to be indirectly negatively modulated by rapamycin and regulates actin polarization. TORC2, but not TORC1, negatively regulates phagocytosis. This protein and dagA protein CRAC, a cytosolic regulator, are both essential for activation of the enzyme adenylyl cyclase. This protein and CRAC do not function redundantly. Both proteins are integral components of the adenylyl cyclase activation pathway. The polypeptide is Protein pianissimo A (piaA) (Dictyostelium discoideum (Social amoeba)).